The primary structure comprises 140 residues: ATP synthase epsilon chain (140 aa).

Belongs to the ATPase epsilon chain family. F-type ATPases have 2 components, CF(1) - the catalytic core - and CF(0) - the membrane proton channel. CF(1) has five subunits: alpha(3), beta(3), gamma(1), delta(1), epsilon(1). CF(0) has three main subunits: a, b and c.

It is found in the cell inner membrane. Functionally, produces ATP from ADP in the presence of a proton gradient across the membrane. The chain is ATP synthase epsilon chain from Neisseria meningitidis serogroup B (strain ATCC BAA-335 / MC58).